The following is a 235-amino-acid chain: Small capsomere-interacting protein (235 aa).

Residues 104–235 (PRIIRPQPPN…SGNASRSRRV (132 aa)) are disordered. Positions 127–139 (PQKTQSADQSALQ) are enriched in polar residues. Residues 158–188 (TTSASVGQQQHVVSGSSGQQPQQGAQSSTVQ) show a composition bias toward low complexity. Residues 220–235 (LSHTGQSGNASRSRRV) are compositionally biased toward polar residues.

It belongs to the herpesviridae small capsomere-interacting protein family. In terms of assembly, interacts with the major capsid protein/MCP.

The protein resides in the virion. It localises to the host nucleus. Functionally, participates in the assembly of the infectious particles by decorating the outer surface of the capsid shell and thus forming a layer between the capsid and the tegument. Complexes composed of the capsid protein VP5 and VP26 assemble together in the host cytoplasm and are translocated to the nucleus, where they accumulate and participate in capsid assembly. Participates in the assembly of the infectious particles by decorating the outer surface of the capsid shell and thus forming a layer between the capsid and the tegument. Complexes composed of the major capsid protein and small capsomere-interacting protein/SCP assemble together in the host cytoplasm and are translocated to the nucleus, where they accumulate and participate in capsid assembly. The sequence is that of Small capsomere-interacting protein from Homo sapiens (Human).